The sequence spans 283 residues: Prepilin leader peptidase/N-methyltransferase (283 aa).

7 helical membrane-spanning segments follow: residues 13–33 (VWLL…NVVI), 106–126 (WRYP…GLLW), 128–148 (PGLA…LAAI), 153–173 (QLLP…FNLA), 176–196 (FVPL…LWLI), 216–236 (LLAA…VLIA), and 259–279 (LAFG…NVLG).

The protein belongs to the peptidase A24 family.

Its subcellular location is the cell inner membrane. The catalysed reaction is Typically cleaves a -Gly-|-Phe- bond to release an N-terminal, basic peptide of 5-8 residues from type IV prepilin, and then N-methylates the new N-terminal amino group, the methyl donor being S-adenosyl-L-methionine.. Functionally, plays a role in type II pseudopili formation by proteolytically removing the leader sequence from substrate proteins and subsequently monomethylating the alpha-amino group of the newly exposed N-terminal phenylalanine. Substrates include proteins required for biogenesis of the type II general secretory apparatus. This Dickeya chrysanthemi (Pectobacterium chrysanthemi) protein is Prepilin leader peptidase/N-methyltransferase (outO).